We begin with the raw amino-acid sequence, 64 residues long: Large ribosomal subunit protein bL33c (64 aa).

Belongs to the bacterial ribosomal protein bL33 family.

It localises to the plastid. It is found in the chloroplast. The protein is Large ribosomal subunit protein bL33c (rpl33) of Trieres chinensis (Marine centric diatom).